An 87-amino-acid polypeptide reads, in one-letter code: Large ribosomal subunit protein bL27 (87 aa).

It belongs to the bacterial ribosomal protein bL27 family.

The sequence is that of Large ribosomal subunit protein bL27 from Wigglesworthia glossinidia brevipalpis.